Reading from the N-terminus, the 301-residue chain is Homoserine O-acetyltransferase (301 aa).

The active-site Acyl-thioester intermediate is cysteine 142. Lysine 163 and serine 192 together coordinate substrate. Residue histidine 235 is the Proton acceptor of the active site. Glutamate 237 is an active-site residue. Substrate is bound at residue arginine 249.

Belongs to the MetA family.

It localises to the cytoplasm. The catalysed reaction is L-homoserine + acetyl-CoA = O-acetyl-L-homoserine + CoA. The protein operates within amino-acid biosynthesis; L-methionine biosynthesis via de novo pathway; O-acetyl-L-homoserine from L-homoserine: step 1/1. Transfers an acetyl group from acetyl-CoA to L-homoserine, forming acetyl-L-homoserine. The polypeptide is Homoserine O-acetyltransferase (Lachnoclostridium phytofermentans (strain ATCC 700394 / DSM 18823 / ISDg) (Clostridium phytofermentans)).